The primary structure comprises 346 residues: Cell division protein ZipA (346 aa).

The Periplasmic portion of the chain corresponds to 1–6; that stretch reads MEDLQL. Residues 7–27 form a helical membrane-spanning segment; the sequence is VLFVLGAIAIVAVLVHGFWSI. Residues 28-346 are Cytoplasmic-facing; sequence RRQQPKSLKD…DYLHRIRANA (319 aa). 2 disordered regions span residues 76-103 and 121-145; these read ANEA…QPVE and QPDF…RQEP.

It belongs to the ZipA family. As to quaternary structure, interacts with FtsZ via their C-terminal domains.

Its subcellular location is the cell inner membrane. Its function is as follows. Essential cell division protein that stabilizes the FtsZ protofilaments by cross-linking them and that serves as a cytoplasmic membrane anchor for the Z ring. Also required for the recruitment to the septal ring of downstream cell division proteins. The sequence is that of Cell division protein ZipA from Shewanella sp. (strain MR-7).